A 35-amino-acid chain; its full sequence is Photosystem II reaction center protein M (35 aa).

A helical membrane pass occupies residues 7 to 27; sequence GFIATILFVLVPTVFLLILYI.

It belongs to the PsbM family. In terms of assembly, PSII is composed of 1 copy each of membrane proteins PsbA, PsbB, PsbC, PsbD, PsbE, PsbF, PsbH, PsbI, PsbJ, PsbK, PsbL, PsbM, PsbT, PsbX, PsbY, PsbZ, Psb30/Ycf12, peripheral proteins PsbO, CyanoQ (PsbQ), PsbU, PsbV and a large number of cofactors. It forms dimeric complexes.

The protein localises to the cellular thylakoid membrane. Functionally, one of the components of the core complex of photosystem II (PSII). PSII is a light-driven water:plastoquinone oxidoreductase that uses light energy to abstract electrons from H(2)O, generating O(2) and a proton gradient subsequently used for ATP formation. It consists of a core antenna complex that captures photons, and an electron transfer chain that converts photonic excitation into a charge separation. This subunit is found at the monomer-monomer interface. The polypeptide is Photosystem II reaction center protein M (Crocosphaera subtropica (strain ATCC 51142 / BH68) (Cyanothece sp. (strain ATCC 51142))).